The primary structure comprises 212 residues: Large ribosomal subunit protein uL3 (212 aa).

The span at 139–153 shows a compositional bias: polar residues; it reads LSHRVTGSIGQNQTP. The interval 139 to 161 is disordered; sequence LSHRVTGSIGQNQTPGKVFKGKK. The residue at position 151 (Gln-151) is an N5-methylglutamine.

The protein belongs to the universal ribosomal protein uL3 family. Part of the 50S ribosomal subunit. Forms a cluster with proteins L14 and L19. In terms of processing, methylated by PrmB.

Functionally, one of the primary rRNA binding proteins, it binds directly near the 3'-end of the 23S rRNA, where it nucleates assembly of the 50S subunit. This chain is Large ribosomal subunit protein uL3, found in Baumannia cicadellinicola subsp. Homalodisca coagulata.